A 153-amino-acid polypeptide reads, in one-letter code: Ubiquitin/ISG15-conjugating enzyme E2 L6 (153 aa).

Positions 2–149 (MASMRVVKEL…AEEFTLRFGV (148 aa)) constitute a UBC core domain. Residue cysteine 86 is the Glycyl thioester intermediate of the active site.

The protein belongs to the ubiquitin-conjugating enzyme family. In terms of assembly, interacts with RNF19A, RNF19B and RNF144B. Interacts with FLT3 (tyrosine phosphorylated). Post-translationally, ISGylated. As to expression, present in natural killer cells (at protein level).

It carries out the reaction S-ubiquitinyl-[E1 ubiquitin-activating enzyme]-L-cysteine + [E2 ubiquitin-conjugating enzyme]-L-cysteine = [E1 ubiquitin-activating enzyme]-L-cysteine + S-ubiquitinyl-[E2 ubiquitin-conjugating enzyme]-L-cysteine.. The protein operates within protein modification; protein ubiquitination. In terms of biological role, catalyzes the covalent attachment of ubiquitin or ISG15 to other proteins. Functions in the E6/E6-AP-induced ubiquitination of p53/TP53. Promotes ubiquitination and subsequent proteasomal degradation of FLT3. This chain is Ubiquitin/ISG15-conjugating enzyme E2 L6 (UBE2L6), found in Homo sapiens (Human).